The sequence spans 145 residues: 3-hydroxyacyl-[acyl-carrier-protein] dehydratase FabZ (145 aa).

Residue His-48 is part of the active site.

The protein belongs to the thioester dehydratase family. FabZ subfamily.

The protein resides in the cytoplasm. It catalyses the reaction a (3R)-hydroxyacyl-[ACP] = a (2E)-enoyl-[ACP] + H2O. In terms of biological role, involved in unsaturated fatty acids biosynthesis. Catalyzes the dehydration of short chain beta-hydroxyacyl-ACPs and long chain saturated and unsaturated beta-hydroxyacyl-ACPs. The protein is 3-hydroxyacyl-[acyl-carrier-protein] dehydratase FabZ of Saccharophagus degradans (strain 2-40 / ATCC 43961 / DSM 17024).